Reading from the N-terminus, the 1129-residue chain is Inositol hexakisphosphate and diphosphoinositol-pentakisphosphate kinase 2 (1129 aa).

Ser-44 carries the phosphoserine modification. Residue 59 to 60 participates in substrate binding; sequence KK. Positions 140, 193, 200, and 219 each coordinate ATP. 219–220 serves as a coordination point for substrate; the sequence is RK. Ser-229 carries the post-translational modification Phosphoserine. Residues 243 to 246 and 252 to 254 each bind ATP; these read EEFM and DVK. 2 residues coordinate substrate: Lys-254 and Arg-268. ATP is bound by residues Ser-270, Asp-315, and 327–329; that span reads DVN. 332–335 is a binding site for substrate; the sequence is SFVK. Residues 377-448 are polyphosphoinositide-binding domain; the sequence is PTTSGTMMEL…VLDIARQLLM (72 aa). Residues 904–945 are disordered; sequence KGCEEDKNLPSGYGYRPASRENEGRRSLKTDDDEPHTSKRDE. A compositionally biased stretch (basic and acidic residues) spans 921-945; sequence ASRENEGRRSLKTDDDEPHTSKRDE. Residues Ser-1051, Ser-1058, and Ser-1066 each carry the phosphoserine modification. Residues 1070 to 1129 form a disordered region; sequence YTPTKILPTPPAALKSSKASSKAAAGGPSQAMAPHTSSRKKSINSKTEGHEPKKSTGKKR. Positions 1081–1098 are enriched in low complexity; that stretch reads AALKSSKASSKAAAGGPS. Phosphoserine occurs at positions 1106 and 1107.

This sequence belongs to the histidine acid phosphatase family. VIP1 subfamily. As to expression, ubiquitously expressed. Expressed in the cochlear and vestibular sensory hair cells, supporting cells and spiral ganglion neurons.

Its subcellular location is the cytoplasm. It is found in the cytosol. The enzyme catalyses 1D-myo-inositol hexakisphosphate + ATP = 1-diphospho-1D-myo-inositol 2,3,4,5,6-pentakisphosphate + ADP. The catalysed reaction is 5-diphospho-1D-myo-inositol 1,2,3,4,6-pentakisphosphate + ATP + H(+) = 1,5-bis(diphospho)-1D-myo-inositol 2,3,4,6-tetrakisphosphate + ADP. Bifunctional inositol kinase that acts in concert with the IP6K kinases IP6K1, IP6K2 and IP6K3 to synthesize the diphosphate group-containing inositol pyrophosphates diphosphoinositol pentakisphosphate, PP-InsP5, and bis-diphosphoinositol tetrakisphosphate, (PP)2-InsP4. PP-InsP5 and (PP)2-InsP4, also respectively called InsP7 and InsP8, regulate a variety of cellular processes, including apoptosis, vesicle trafficking, cytoskeletal dynamics, exocytosis, insulin signaling and neutrophil activation. Phosphorylates inositol hexakisphosphate (InsP6) at position 1 to produce PP-InsP5 which is in turn phosphorylated by IP6Ks to produce (PP)2-InsP4. Alternatively, phosphorylates PP-InsP5 at position 1, produced by IP6Ks from InsP6, to produce (PP)2-InsP4. Required for normal hearing. In Mus musculus (Mouse), this protein is Inositol hexakisphosphate and diphosphoinositol-pentakisphosphate kinase 2.